The primary structure comprises 165 residues: Large ribosomal subunit protein uL11 (165 aa).

Belongs to the universal ribosomal protein uL11 family.

Functionally, binds directly to 26S ribosomal RNA. This chain is Large ribosomal subunit protein uL11 (rpl-12), found in Caenorhabditis briggsae.